Reading from the N-terminus, the 249-residue chain is Isoprenyl transferase (249 aa).

D25 is an active-site residue. A Mg(2+)-binding site is contributed by D25. Residues 26–29 (GNGR), W30, R38, H42, and 70–72 (STE) contribute to the substrate site. Catalysis depends on N73, which acts as the Proton acceptor. Substrate is bound by residues W74, R76, R197, and 203–205 (RLS). E216 contacts Mg(2+).

The protein belongs to the UPP synthase family. In terms of assembly, homodimer. Mg(2+) is required as a cofactor.

In terms of biological role, catalyzes the condensation of isopentenyl diphosphate (IPP) with allylic pyrophosphates generating different type of terpenoids. The chain is Isoprenyl transferase from Streptococcus pyogenes serotype M3 (strain ATCC BAA-595 / MGAS315).